Reading from the N-terminus, the 544-residue chain is Methionine--tRNA ligase (544 aa).

The 'HIGH' region motif lies at 10–20 (PYANGSLHLGH). 4 residues coordinate Zn(2+): Cys-141, Cys-144, Cys-153, and Cys-156. The 'KMSKS' region motif lies at 329 to 333 (KLSTS). Thr-332 is a binding site for ATP.

The protein belongs to the class-I aminoacyl-tRNA synthetase family. MetG type 1 subfamily. Monomer. Zn(2+) is required as a cofactor.

It localises to the cytoplasm. The catalysed reaction is tRNA(Met) + L-methionine + ATP = L-methionyl-tRNA(Met) + AMP + diphosphate. Is required not only for elongation of protein synthesis but also for the initiation of all mRNA translation through initiator tRNA(fMet) aminoacylation. The protein is Methionine--tRNA ligase of Bacillus cereus (strain B4264).